The chain runs to 82 residues: Putative membrane protein insertion efficiency factor (82 aa).

Belongs to the UPF0161 family.

It localises to the cell inner membrane. Functionally, could be involved in insertion of integral membrane proteins into the membrane. In Colwellia psychrerythraea (strain 34H / ATCC BAA-681) (Vibrio psychroerythus), this protein is Putative membrane protein insertion efficiency factor.